The following is a 537-amino-acid chain: Protein swallow (537 aa).

Positions 344 to 406 (QPNAGKPKKN…SESSHPSSND (63 aa)) are disordered. Composition is skewed to low complexity over residues 371-383 (NGNG…HSSS) and 392-406 (AAPN…SSND).

As to quaternary structure, may be constituted of a homo- or heterodimer.

The protein localises to the nucleus. Its function is as follows. Has a role in localizing bicoid mRNA at the anterior margin of the oocyte during oogenesis, and a poorly characterized role in nuclear divisions in early embryogenesis. The protein is Protein swallow (swa) of Drosophila pseudoobscura pseudoobscura (Fruit fly).